Reading from the N-terminus, the 248-residue chain is Probable transcriptional regulatory protein RHECIAT_CH0003714 (248 aa).

It belongs to the TACO1 family.

It is found in the cytoplasm. The protein is Probable transcriptional regulatory protein RHECIAT_CH0003714 of Rhizobium etli (strain CIAT 652).